The following is a 265-amino-acid chain: Late expression factor 5 (265 aa).

Belongs to the baculoviridae LEF-5 family. In terms of assembly, interacts (via N-terminus) with itself.

It is found in the host nucleus. In terms of biological role, plays a role in the transcription of late viral genes. May function as an transcriptional initiation factor. This chain is Late expression factor 5 (LEF-5), found in Lepidoptera (butterflies and moths).